The following is a 113-amino-acid chain: Hydrogenase maturation factor HypA (113 aa).

Residue H2 participates in Ni(2+) binding. Residues C73, C76, C89, and C92 each contribute to the Zn(2+) site.

The protein belongs to the HypA/HybF family.

In terms of biological role, involved in the maturation of [NiFe] hydrogenases. Required for nickel insertion into the metal center of the hydrogenase. The protein is Hydrogenase maturation factor HypA of Rhizobium leguminosarum bv. viciae.